Consider the following 1472-residue polypeptide: Type IV pilus biogenesis factor PilY1 homolog PD_1611 (1472 aa).

Aspartate 1170, aspartate 1172, aspartate 1174, leucine 1176, and aspartate 1178 together coordinate Ca(2+). Positions 1383-1397 (RGSRSSIGNSDTGAV) are enriched in polar residues. Residues 1383-1403 (RGSRSSIGNSDTGAVSTGGDA) form a disordered region.

The protein belongs to the PilY1 family.

It is found in the fimbrium. One of the three PilY1 homologs of X.fastidiosa, which are involved in bacterial twitching motility as component of the filamentous type IV pili (T4P). The twitching motility of this protein is enhanced by calcium, which may provide the bacterium an adaptive advantage in environments with high calcium concentrations. The sequence is that of Type IV pilus biogenesis factor PilY1 homolog PD_1611 from Xylella fastidiosa (strain Temecula1 / ATCC 700964).